A 246-amino-acid chain; its full sequence is Probable transcriptional regulatory protein CLD_1467 (246 aa).

Belongs to the TACO1 family.

It localises to the cytoplasm. This chain is Probable transcriptional regulatory protein CLD_1467, found in Clostridium botulinum (strain Okra / Type B1).